The chain runs to 374 residues: Pectate lyase 2 (374 aa).

Residues 1–22 (MKYLLPTAAAGLLLLAAQPAMA) form the signal peptide. An intrachain disulfide couples Cys93 to Cys176. Ca(2+) contacts are provided by Asp150, Asp152, Glu187, and Asp191. Arg239 is a catalytic residue. An intrachain disulfide couples Cys350 to Cys373.

Belongs to the polysaccharide lyase 1 family. PLADES subfamily. It depends on Ca(2+) as a cofactor.

It is found in the secreted. It catalyses the reaction Eliminative cleavage of (1-&gt;4)-alpha-D-galacturonan to give oligosaccharides with 4-deoxy-alpha-D-galact-4-enuronosyl groups at their non-reducing ends.. The protein operates within glycan metabolism; pectin degradation; 2-dehydro-3-deoxy-D-gluconate from pectin: step 2/5. Its function is as follows. Involved in maceration and soft-rotting of plant tissue. The sequence is that of Pectate lyase 2 (pel2) from Pectobacterium carotovorum (Erwinia carotovora).